The sequence spans 136 residues: Histone H2A (136 aa).

Positions 1–11 (MTGGGKSGGKA) are enriched in gly residues. The disordered stretch occupies residues 1-24 (MTGGGKSGGKASGSKNAQSRSSKA). An N6-acetyllysine mark is found at Lys-6 and Lys-10. Gln-107 is subject to N5-methylglutamine. Phosphoserine is present on Ser-133. Residues 133-134 (SQ) carry the [ST]-Q motif motif.

This sequence belongs to the histone H2A family. As to quaternary structure, the nucleosome is a histone octamer containing two molecules each of H2A, H2B, H3 and H4 assembled in one H3-H4 heterotetramer and two H2A-H2B heterodimers. The octamer wraps approximately 147 bp of DNA. Phosphorylated to form H2AS128ph (gamma-H2A) in response to DNA double-strand breaks (DSBs) generated by exogenous genotoxic agents and by stalled replication forks. Phosphorylation is dependent on the DNA damage checkpoint kinases MEC1/ATR and TEL1/ATM, spreads on either side of a detected DSB site and may mark the surrounding chromatin for recruitment of proteins required for DNA damage signaling and repair. Gamma-H2A is removed from the DNA prior to the strand invasion-primer extension step of the repair process and subsequently dephosphorylated. Dephosphorylation is necessary for efficient recovery from the DNA damage checkpoint. Post-translationally, acetylated by ESA1 to form H2AK4ac and H2AK7ac.

It localises to the nucleus. The protein resides in the chromosome. Functionally, core component of nucleosome which plays a central role in DNA double strand break (DSB) repair. Nucleosomes wrap and compact DNA into chromatin, limiting DNA accessibility to the cellular machineries which require DNA as a template. Histones thereby play a central role in transcription regulation, DNA repair, DNA replication and chromosomal stability. DNA accessibility is regulated via a complex set of post-translational modifications of histones, also called histone code, and nucleosome remodeling. In Pyricularia oryzae (strain Y34) (Rice blast fungus), this protein is Histone H2A (HTA1).